Consider the following 403-residue polypeptide: F-box/kelch-repeat protein At5g39560 (403 aa).

The F-box domain maps to 26 to 72 (PPSLMSLPYEIIENILARISKWSYPNLSLVSKSFLSLLSSPQLYKTR). 4 Kelch repeats span residues 138 to 182 (EIYV…LIDQ), 184 to 229 (IYVL…VWPN), 248 to 294 (NPNA…IENV), and 296 to 340 (YACH…VNYG).

The polypeptide is F-box/kelch-repeat protein At5g39560 (Arabidopsis thaliana (Mouse-ear cress)).